Consider the following 805-residue polypeptide: Putative cation-transporting ATPase MJ1226 (805 aa).

4 helical membrane-spanning segments follow: residues 53–73 (SYFW…SAII), 75–95 (HWVD…VGFW), 226–246 (IGDY…AVEL), and 258–278 (FALV…LSIT). D311 acts as the 4-aspartylphosphate intermediate in catalysis. The next 6 helical transmembrane spans lie at 615–637 (YVIY…ILIL), 641–663 (PITA…AIAY), 680–700 (ILML…LIFY), 712–734 (ELQS…VTRI), 747–769 (LLFW…GIFM), and 773–790 (GWDL…WMLI).

It belongs to the cation transport ATPase (P-type) (TC 3.A.3) family. Type IIIA subfamily.

It is found in the cell membrane. The catalysed reaction is ATP + H2O = ADP + phosphate + H(+). The protein is Putative cation-transporting ATPase MJ1226 of Methanocaldococcus jannaschii (strain ATCC 43067 / DSM 2661 / JAL-1 / JCM 10045 / NBRC 100440) (Methanococcus jannaschii).